Reading from the N-terminus, the 223-residue chain is Ribonuclease DdI (223 aa).

The first 25 residues, Met1 to Glu25, serve as a signal peptide directing secretion. The cysteines at positions 46 and 51 are disulfide-linked. Residues His63, Glu113, and His117 contribute to the active site. A disulfide bridge links Cys78 with Cys120. An N-linked (GlcNAc...) asparagine glycan is attached at Asn144. 2 cysteine pairs are disulfide-bonded: Cys183–Cys213 and Cys194–Cys205.

It belongs to the RNase T2 family.

The protein localises to the lysosome. The enzyme catalyses a ribonucleotidyl-ribonucleotide-RNA + H2O = a 3'-end 3'-phospho-ribonucleotide-RNA + a 5'-end dephospho-ribonucleoside-RNA + H(+). Its activity is regulated as follows. Inhibited by Cu(2+) and Zn(2+). Its function is as follows. Releases mononucleotides from RNA in the order of 3'-GMP &gt; 3'-UMP &gt; 3'-AMP &gt; 3'-CMP. The sequence is that of Ribonuclease DdI (ddiA) from Dictyostelium discoideum (Social amoeba).